Reading from the N-terminus, the 392-residue chain is [Phe13]-bombesin receptor (392 aa).

The Extracellular segment spans residues 1–40 (MPEGFQSLNQTLPSAISSIAHLESLNDSFILGAKQSEDVS). Residues Asn-9 and Asn-26 are each glycosylated (N-linked (GlcNAc...) asparagine). Residues 41 to 62 (PGLEILALISVTYAVIISVGIL) form a helical membrane-spanning segment. Residues 63 to 81 (GNTILIKVFFKIKSMQTVP) are Cytoplasmic-facing. Residues 82–102 (NIFITSLAFGDLLLLLTCVPV) traverse the membrane as a helical segment. At 103–120 (DASRYIVDTWMFGRAGCK) the chain is on the extracellular side. Cys-119 and Cys-202 form a disulfide bridge. The chain crosses the membrane as a helical span at residues 121 to 142 (IISFIQLTSVGVSVFTLTVLSA). Topologically, residues 143 to 162 (DRYRAIVKPLQLQTSDAVLK) are cytoplasmic. The helical transmembrane segment at 163 to 183 (TCGKAVCVWIISMLLAAPEAV) threads the bilayer. Over 184–219 (FSDLYEFGSSEKNTTFEACAPYPVSEKILQETHSLI) the chain is Extracellular. Residues 220–240 (CFLVFYIVPLSIISAYYFLIA) form a helical membrane-spanning segment. The Cytoplasmic segment spans residues 241–271 (KTLYKSTFNMPAEEHTHARKQIESRKRVAKT). A helical transmembrane segment spans residues 272–292 (VLVLVALFAVCWLPNHMLYLY). The Extracellular segment spans residues 293-312 (RSFTYHSAVNSSAFHLSATI). The helical transmembrane segment at 313–332 (FARVLAFSNSCVNPFALYWL) threads the bilayer. At 333 to 392 (SRSFRQHFKKQVYCCKTEPPASQQSPTHSSTITGITAVKGNIQMSEISITLLSAYDVKKE) the chain is on the cytoplasmic side. The S-palmitoyl cysteine moiety is linked to residue Cys-346.

The protein belongs to the G-protein coupled receptor 1 family. Expressed only in brain, primarily in cortex and forebrain and at low levels in the midbrain.

It localises to the cell membrane. Its function is as follows. The relative rank potency of bombesin-like peptides for this receptor is [Phe13]bombesin &gt; [Leu13]bombesin &gt; GRP &gt; neuromedin-B. This Bombina orientalis (Oriental fire-bellied toad) protein is [Phe13]-bombesin receptor (BB4).